A 422-amino-acid chain; its full sequence is Blood group Rh(D) polypeptide (422 aa).

Helical transmembrane passes span 13–33 (LPLW…FLIG), 43–63 (FMAI…GFGF), 76–96 (VAFS…LDYF), 113–135 (FLSI…AVLG), 137–159 (VNLV…IRVA), 170–190 (IIMM…AWWL), 215–235 (LFAM…NSAL), 244–266 (AVFN…SALS), 272–292 (INMV…GAPS), 294–314 (LISS…ISIW), 335–355 (YTFG…HIIA), and 372–392 (VGAL…TGCL).

The protein belongs to the ammonium transporter (TC 2.A.49) family. Rh subfamily. Palmitoylated.

It is found in the cell membrane. Functionally, may be part of an oligomeric complex which is likely to have a transport or channel function in the erythrocyte membrane. This Rattus norvegicus (Rat) protein is Blood group Rh(D) polypeptide (Rhd).